Reading from the N-terminus, the 169-residue chain is Oleosin Cor a 15 (169 aa).

A run of 2 helical transmembrane segments spans residues 38 to 58 (IAVV…GLTF) and 70 to 90 (PLFV…GLAV). A Proline-knot motif is present at residues 70-81 (PLFVLCSPVLVP). Composition is skewed to basic and acidic residues over residues 122 to 131 (QMEHAKRRAQ) and 160 to 169 (EGGRGEEKKT). Residues 122-169 (QMEHAKRRAQDTAGHLGQKARETGQTVTGKGQEAGKTLEGGRGEEKKT) form a disordered region.

It belongs to the oleosin family. In terms of tissue distribution, expressed in seeds (at protein level).

It localises to the lipid droplet. The protein localises to the membrane. Its function is as follows. May have a structural role to stabilize the lipid body during desiccation of the seed by preventing coalescence of the oil. Probably interacts with both lipid and phospholipid moieties of lipid bodies. May also provide recognition signals for specific lipase anchorage in lipolysis during seedling growth. This is Oleosin Cor a 15 from Corylus avellana (European hazel).